Consider the following 250-residue polypeptide: Ubiquinone/menaquinone biosynthesis C-methyltransferase UbiE (250 aa).

S-adenosyl-L-methionine is bound by residues Thr-73, Asp-94, and 122–123 (DA).

The protein belongs to the class I-like SAM-binding methyltransferase superfamily. MenG/UbiE family.

The enzyme catalyses a 2-demethylmenaquinol + S-adenosyl-L-methionine = a menaquinol + S-adenosyl-L-homocysteine + H(+). The catalysed reaction is a 2-methoxy-6-(all-trans-polyprenyl)benzene-1,4-diol + S-adenosyl-L-methionine = a 5-methoxy-2-methyl-3-(all-trans-polyprenyl)benzene-1,4-diol + S-adenosyl-L-homocysteine + H(+). The protein operates within quinol/quinone metabolism; menaquinone biosynthesis; menaquinol from 1,4-dihydroxy-2-naphthoate: step 2/2. It participates in cofactor biosynthesis; ubiquinone biosynthesis. Functionally, methyltransferase required for the conversion of demethylmenaquinol (DMKH2) to menaquinol (MKH2) and the conversion of 2-polyprenyl-6-methoxy-1,4-benzoquinol (DDMQH2) to 2-polyprenyl-3-methyl-6-methoxy-1,4-benzoquinol (DMQH2). The protein is Ubiquinone/menaquinone biosynthesis C-methyltransferase UbiE of Coxiella burnetii (strain RSA 331 / Henzerling II).